The sequence spans 140 residues: Small ribosomal subunit protein eS12 (140 aa).

The protein belongs to the eukaryotic ribosomal protein eS12 family. Part of the small subunit (SSU) processome, composed of more than 70 proteins and the RNA chaperone small nucleolar RNA (snoRNA) U3. Subunit of the 40S ribosomal complex.

It localises to the nucleus. Its subcellular location is the nucleolus. Its function is as follows. Part of the small subunit (SSU) processome, first precursor of the small eukaryotic ribosomal subunit. During the assembly of the SSU processome in the nucleolus, many ribosome biogenesis factors, an RNA chaperone and ribosomal proteins associate with the nascent pre-rRNA and work in concert to generate RNA folding, modifications, rearrangements and cleavage as well as targeted degradation of pre-ribosomal RNA by the RNA exosome. Subunit of the 40S ribosomal complex. Involved in cold-warm shock-induced translocation of the RNA exosome components from the nucleolus to nucleoplasm. The chain is Small ribosomal subunit protein eS12 (rps-12) from Caenorhabditis elegans.